A 353-amino-acid chain; its full sequence is MARTPERRVRTLDFAQFCHGEPSSSHGFCRELVDCLRSLGFVKIRNHGISGEEIEKVFVMNKLFFSLPQAAKAKAAHPPEANPHRGYSYVGQEKLSRVKDYEKGKRSIVDVYDIKESYDQGPAVDKLYPNRWPDKQDIPGFRVVMEKFYERCHQVHQDVLRAIATGFDLSPSFLTDLCCENTSELRLNHYPGVHPSSLRKGAKRISEHTDFGTVTLLFQDSVGGLEIEDQNSPGTYFPVSSERKSDMIVNVGDCIQRWTNDKILSTSHRVVLPEDRDALIKDRYSVAYFGKPSRSQLVSPLREFVKEGEKPKYSAISAWQYNQEKLVLTYGGDEEILVPKPSSSVCTGVGQLQ.

In terms of domain architecture, Fe2OG dioxygenase spans 181 to 292 (NTSELRLNHY…RYSVAYFGKP (112 aa)). Fe cation contacts are provided by H208, D210, and H268. R283 provides a ligand contact to 2-oxoglutarate.

The protein belongs to the iron/ascorbate-dependent oxidoreductase family. Requires Fe(2+) as cofactor.

The catalysed reaction is L-proline + 2-oxoglutarate + O2 = trans-4-hydroxy-L-proline + succinate + CO2. It catalyses the reaction L-proline + 2-oxoglutarate + O2 = trans-3-hydroxy-L-proline + succinate + CO2. It carries out the reaction D-proline + 2-oxoglutarate + O2 = cis-4-hydroxy-D-proline + succinate + CO2. The protein operates within secondary metabolite biosynthesis. Functionally, 2-oxoglutarate-Fe(II) type oxidoreductase; part of the gene cluster that mediates the biosynthesis of pyrrolopyrazines, secondary metabolites showing insecticidal activity. Within the pathway, ppzD converts L-proline into trans-4-hydroxy-L-proline as a major product, yielding a key precursor for peramine biosynthesis. PpzD is also able to convert L-proline into trans-3-hydroxy-L-proline. The single multifunctional NRPS ppzA is sufficient to produce peramine via condensation of 1-pyrroline-5-carboxylate and arginine, N-methylation of the alpha-amino group of arginine and reduction of the thioester and the cyclization to form an iminium ion resulting in release from the peptide synthetase. Deprotonation of this intermediate and oxidation of the pyrroline ring would give rise to peramine. In Epichloe species that produce only peramine, the peramine synthetase gene is not localized in a gene cluster, in contrast to Metarhizium species that contain additional pyrrolopyrazine biosynthesis genes. The 2-oxoglutarate-Fe(II) type oxidoreductase ppzC hydroxylates peramine to yield the newly identified compound 8-hydroxyperamine whereas ppzD converts L-proline into trans-4-hydroxy-L-proline, a precursor of peramine biosynthesis. The polypeptide is 2-oxoglutarate-Fe(II) type oxidoreductase ppzD (Metarhizium rileyi (strain RCEF 4871) (Nomuraea rileyi)).